Here is a 260-residue protein sequence, read N- to C-terminus: Flap endonuclease Xni (260 aa).

Asp-109 contributes to the Mg(2+) binding site. Residues 165-259 form the 5'-3' exonuclease domain; that stretch reads VKPSQLADYW…DIRFTGPNKA (95 aa). K(+) contacts are provided by Leu-176, Pro-185, Val-187, and Val-190. Residues 189–194 are interaction with DNA; it reads GVGPKA.

This sequence belongs to the Xni family. Mg(2+) serves as cofactor. The cofactor is K(+).

Has flap endonuclease activity. During DNA replication, flap endonucleases cleave the 5'-overhanging flap structure that is generated by displacement synthesis when DNA polymerase encounters the 5'-end of a downstream Okazaki fragment. This is Flap endonuclease Xni from Vibrio campbellii (strain ATCC BAA-1116).